The chain runs to 237 residues: Ribonuclease 3 (237 aa).

The region spanning 8-134 (RSALLEKLGV…VIGAVYLDAG (127 aa)) is the RNase III domain. Residue E47 coordinates Mg(2+). The active site involves D51. Mg(2+) is bound by residues D120 and E123. E123 is a catalytic residue. Positions 161 to 229 (DPKTSLQEAA…ALSAWTALTN (69 aa)) constitute a DRBM domain.

This sequence belongs to the ribonuclease III family. Homodimer. The cofactor is Mg(2+).

It is found in the cytoplasm. The catalysed reaction is Endonucleolytic cleavage to 5'-phosphomonoester.. Digests double-stranded RNA. Involved in the processing of primary rRNA transcript to yield the immediate precursors to the large and small rRNAs (23S and 16S). Processes some mRNAs, and tRNAs when they are encoded in the rRNA operon. Processes pre-crRNA and tracrRNA of type II CRISPR loci if present in the organism. This chain is Ribonuclease 3, found in Leifsonia xyli subsp. xyli (strain CTCB07).